Here is a 101-residue protein sequence, read N- to C-terminus: Small ribosomal subunit protein uS14A (101 aa).

The interval L31 to D67 is disordered. Residues E38–R53 show a composition bias toward basic and acidic residues.

The protein belongs to the universal ribosomal protein uS14 family. As to quaternary structure, part of the 30S ribosomal subunit. Contacts proteins S3 and S10.

In terms of biological role, binds 16S rRNA, required for the assembly of 30S particles and may also be responsible for determining the conformation of the 16S rRNA at the A site. This chain is Small ribosomal subunit protein uS14A, found in Streptomyces coelicolor (strain ATCC BAA-471 / A3(2) / M145).